We begin with the raw amino-acid sequence, 485 residues long: ATP-dependent 6-phosphofructokinase 7 (485 aa).

Residues Gly101, 164–165 (RG), and 189–192 (GDGT) each bind ATP. A Mg(2+)-binding site is contributed by Asp190. Residues 218–220 (TID), 263–265 (MGR), Glu319, and 374–377 (YMIR) each bind substrate. The Proton acceptor role is filled by Asp220. The segment at 449 to 485 (SFLGPKDTSEEKKELPETPLLDDGAVDIPPVTKEVTK) is disordered. The span at 455–464 (DTSEEKKELP) shows a compositional bias: basic and acidic residues.

It belongs to the phosphofructokinase type A (PFKA) family. PPi-dependent PFK group II subfamily. Atypical ATP-dependent clade 'X' sub-subfamily. Homotetramer. Mg(2+) serves as cofactor. In terms of tissue distribution, expressed in roots, leaves, stems and flowers.

The protein resides in the cytoplasm. It carries out the reaction beta-D-fructose 6-phosphate + ATP = beta-D-fructose 1,6-bisphosphate + ADP + H(+). Its pathway is carbohydrate degradation; glycolysis; D-glyceraldehyde 3-phosphate and glycerone phosphate from D-glucose: step 3/4. Its activity is regulated as follows. Allosterically activated by AMP. Its function is as follows. Catalyzes the phosphorylation of D-fructose 6-phosphate to fructose 1,6-bisphosphate by ATP, the first committing step of glycolysis. In Arabidopsis thaliana (Mouse-ear cress), this protein is ATP-dependent 6-phosphofructokinase 7.